We begin with the raw amino-acid sequence, 536 residues long: Lysosomal acid glucosylceramidase (536 aa).

The N-terminal stretch at 1–39 (MEFSSPSREECPKPSGRVNIMAGSLTGLLLLQAVSWASG) is a signal peptide. Intrachain disulfides connect Cys-43–Cys-55 and Cys-57–Cys-62. N-linked (GlcNAc...) asparagine glycosylation is found at Asn-58, Asn-98, and Asn-185. The Proton donor role is filled by Glu-274. An N-linked (GlcNAc...) asparagine glycan is attached at Asn-309. The Nucleophile role is filled by Glu-379. A glycan (N-linked (GlcNAc...) asparagine) is linked at Asn-501.

The protein belongs to the glycosyl hydrolase 30 family. Interacts with saposin-C. Interacts with SCARB2. Interacts with TCP1. Interacts with GRN; this interaction prevents aggregation of GBA1-SCARB2 complex via interaction with HSPA1A upon stress.

The protein resides in the lysosome membrane. The enzyme catalyses a beta-D-glucosyl-(1&lt;-&gt;1')-N-acylsphing-4-enine + H2O = an N-acylsphing-4-enine + D-glucose. It catalyses the reaction a beta-D-galactosyl-(1&lt;-&gt;1')-N-acylsphing-4-enine + H2O = an N-acylsphing-4-enine + D-galactose. The catalysed reaction is cholesteryl 3-beta-D-glucoside + H2O = cholesterol + D-glucose. It carries out the reaction a beta-D-glucosyl-(1&lt;-&gt;1')-N-acylsphing-4-enine + cholesterol = cholesteryl 3-beta-D-glucoside + an N-acylsphing-4-enine. The enzyme catalyses beta-D-glucosyl-N-(9Z-octadecenoyl)-sphing-4E-enine + cholesterol = N-(9Z-octadecenoyl)-sphing-4-enine + cholesteryl 3-beta-D-glucoside. It catalyses the reaction beta-D-glucosyl-N-octanoylsphing-4E-enine + cholesterol = N-octanoylsphing-4-enine + cholesteryl 3-beta-D-glucoside. The catalysed reaction is beta-D-glucosyl-N-dodecanoylsphing-4-enine + cholesterol = N-dodecanoylsphing-4-enine + cholesteryl 3-beta-D-glucoside. It carries out the reaction beta-D-glucosyl-(1&lt;-&gt;1)-N-octadecanoylsphing-4-enine + cholesterol = N-octadecanoylsphing-4-enine + cholesteryl 3-beta-D-glucoside. The enzyme catalyses beta-D-glucosyl-(1&lt;-&gt;1')-N-(15Z-tetracosenoyl)-sphing-4-enine + cholesterol = N-(15Z-tetracosenoyl)-sphing-4-enine + cholesteryl 3-beta-D-glucoside. It catalyses the reaction a beta-D-galactosyl-(1&lt;-&gt;1')-N-acylsphing-4-enine + cholesterol = cholesteryl 3-beta-D-galactoside + an N-acylsphing-4-enine. The catalysed reaction is 1-(beta-D-galactosyl)-N-dodecanoylsphing-4-enine + cholesterol = cholesteryl 3-beta-D-galactoside + N-dodecanoylsphing-4-enine. It carries out the reaction a beta-D-xylosyl-(1&lt;-&gt;1')-N-acylsphing-4-enine + cholesterol = cholesteryl 3-beta-D-xyloside + an N-acylsphing-4-enine. The enzyme catalyses beta-D-xylosyl-(1&lt;-&gt;1')-N-(9Z-octadecenoyl)-sphing-4-enine + cholesterol = cholesteryl 3-beta-D-xyloside + N-(9Z-octadecenoyl)-sphing-4-enine. The protein operates within steroid metabolism; cholesterol metabolism. It participates in sphingolipid metabolism. In terms of biological role, glucosylceramidase that catalyzes, within the lysosomal compartment, the hydrolysis of glucosylceramides/GlcCers (such as beta-D-glucosyl-(1&lt;-&gt;1')-N-acylsphing-4-enine) into free ceramides (such as N-acylsphing-4-enine) and glucose. Plays a central role in the degradation of complex lipids and the turnover of cellular membranes. Through the production of ceramides, participates in the PKC-activated salvage pathway of ceramide formation. Catalyzes the glucosylation of cholesterol, through a transglucosylation reaction where glucose is transferred from GlcCer to cholesterol. GlcCer containing mono-unsaturated fatty acids (such as beta-D-glucosyl-N-(9Z-octadecenoyl)-sphing-4-enine) are preferred as glucose donors for cholesterol glucosylation when compared with GlcCer containing same chain length of saturated fatty acids (such as beta-D-glucosyl-N-octadecanoyl-sphing-4-enine). Under specific conditions, may alternatively catalyze the reverse reaction, transferring glucose from cholesteryl 3-beta-D-glucoside to ceramide. Can also hydrolyze cholesteryl 3-beta-D-glucoside producing glucose and cholesterol. Catalyzes the hydrolysis of galactosylceramides/GalCers (such as beta-D-galactosyl-(1&lt;-&gt;1')-N-acylsphing-4-enine), as well as the transfer of galactose between GalCers and cholesterol in vitro, but with lower activity than with GlcCers. Contrary to GlcCer and GalCer, xylosylceramide/XylCer (such as beta-D-xyosyl-(1&lt;-&gt;1')-N-acylsphing-4-enine) is not a good substrate for hydrolysis, however it is a good xylose donor for transxylosylation activity to form cholesteryl 3-beta-D-xyloside. The sequence is that of Lysosomal acid glucosylceramidase (GBA1) from Pongo abelii (Sumatran orangutan).